The chain runs to 82 residues: Small ribosomal subunit protein bS16 (82 aa).

This sequence belongs to the bacterial ribosomal protein bS16 family.

The sequence is that of Small ribosomal subunit protein bS16 from Psychromonas ingrahamii (strain DSM 17664 / CCUG 51855 / 37).